Reading from the N-terminus, the 294-residue chain is ATP phosphoribosyltransferase (294 aa).

Belongs to the ATP phosphoribosyltransferase family. Long subfamily. Mg(2+) is required as a cofactor.

It is found in the cytoplasm. It catalyses the reaction 1-(5-phospho-beta-D-ribosyl)-ATP + diphosphate = 5-phospho-alpha-D-ribose 1-diphosphate + ATP. Its pathway is amino-acid biosynthesis; L-histidine biosynthesis; L-histidine from 5-phospho-alpha-D-ribose 1-diphosphate: step 1/9. Its activity is regulated as follows. Feedback inhibited by histidine. Functionally, catalyzes the condensation of ATP and 5-phosphoribose 1-diphosphate to form N'-(5'-phosphoribosyl)-ATP (PR-ATP). Has a crucial role in the pathway because the rate of histidine biosynthesis seems to be controlled primarily by regulation of HisG enzymatic activity. The polypeptide is ATP phosphoribosyltransferase (Maricaulis maris (strain MCS10) (Caulobacter maris)).